A 63-amino-acid polypeptide reads, in one-letter code: MAVPKAKTSKWRRNQRRAQNFFNKFRRSLPSLSVCSNCGERIIPHRVCPYCGHYKGKEVIETE.

It belongs to the bacterial ribosomal protein bL32 family.

This Aquifex aeolicus (strain VF5) protein is Large ribosomal subunit protein bL32 (rpmF).